We begin with the raw amino-acid sequence, 235 residues long: Purine nucleoside phosphorylase DeoD-type (235 aa).

Residue H4 coordinates a purine D-ribonucleoside. Phosphate contacts are provided by residues G20, R24, R43, and R87–T90. A purine D-ribonucleoside contacts are provided by residues E162, E179–E181, and S203–D204. Residue D204 is the Proton donor of the active site.

Belongs to the PNP/UDP phosphorylase family. Homohexamer; trimer of homodimers.

It carries out the reaction a purine D-ribonucleoside + phosphate = a purine nucleobase + alpha-D-ribose 1-phosphate. It catalyses the reaction a purine 2'-deoxy-D-ribonucleoside + phosphate = a purine nucleobase + 2-deoxy-alpha-D-ribose 1-phosphate. Functionally, catalyzes the reversible phosphorolytic breakdown of the N-glycosidic bond in the beta-(deoxy)ribonucleoside molecules, with the formation of the corresponding free purine bases and pentose-1-phosphate. This Bacillus cytotoxicus (strain DSM 22905 / CIP 110041 / 391-98 / NVH 391-98) protein is Purine nucleoside phosphorylase DeoD-type.